Here is a 742-residue protein sequence, read N- to C-terminus: MMLLKRSNDNIVLSPIMNRQNRQNNRQNSTKKKPFIPNNQDRFRSKHRDSSRMDPVDNKTLISFTSGKPNQEKSFSHDTGTNKYSSSKLSETFTQTKPNNTDKFRSKYSKQRYSENHKILETISRSHSTILNVDIKDNVELLNQLLSFNKESNQQIPNNPSVPKRVYFVLDKSSNQTDKNMARITDDNKSNGLSIENNSDFVNMILPYVSGAIKNIRVKPWFCSMIIINNFHMENKYFVMILKLWTCYYNIWKKNKKIPEPPKLVTITNHYDDTISNLLPSNTSSFTLDKNSCYTTVVYDNESENLSIGSKARYQRAANIAKHYSDLYRDKSYNGTYVIFVPSKKEYLIVKKHLESIITDKSQLKRIVVTTKFPTEYGISVVIDTMTHYYSDFNMDQESSQTLGWISDNTSKLRRNVINKYSGGIYVVMQSEINYKTFCTKSMTNNFSIYDIVKLIRHNIDPEIIMDDIMDQIRLDSVLIFLKKLGIINANNQLTVMGRFCLEFPLDLRKSAMIYHLYNNGTPNLMLYILVLSVIDNYGSGIYVWPKKEDNEDLIEYTMRIDDIMLELEDKFAGYSDVDTLFNIWTTIAKYGNPLNVNYVRKFCDDNRLNFSKMRNAINLTKDCLDVFSENSFNVNLNLTNFDQPYGKTFYKILEITHFDSKIVVSYDYFKHKTIAYHNDKECCIDNRAIHKIDLGNNPEKTYYALSHNRYTTFTEDDIDIINVLHALPDSDHETQQDFFPD.

Residues 1 to 102 (MMLLKRSNDN…FTQTKPNNTD (102 aa)) are disordered. Over residues 18 to 28 (NRQNRQNNRQN) the composition is skewed to low complexity. Residues 48–57 (RDSSRMDPVD) show a composition bias toward basic and acidic residues. Polar residues-rich tracts occupy residues 60–69 (TLISFTSGKP) and 77–99 (HDTG…TKPN).

This is an uncharacterized protein from Acanthamoeba polyphaga mimivirus (APMV).